We begin with the raw amino-acid sequence, 436 residues long: Gamma-glutamyl phosphate reductase (436 aa).

This sequence belongs to the gamma-glutamyl phosphate reductase family.

It localises to the cytoplasm. It catalyses the reaction L-glutamate 5-semialdehyde + phosphate + NADP(+) = L-glutamyl 5-phosphate + NADPH + H(+). The protein operates within amino-acid biosynthesis; L-proline biosynthesis; L-glutamate 5-semialdehyde from L-glutamate: step 2/2. Functionally, catalyzes the NADPH-dependent reduction of L-glutamate 5-phosphate into L-glutamate 5-semialdehyde and phosphate. The product spontaneously undergoes cyclization to form 1-pyrroline-5-carboxylate. The polypeptide is Gamma-glutamyl phosphate reductase (Prochlorococcus marinus subsp. pastoris (strain CCMP1986 / NIES-2087 / MED4)).